The sequence spans 327 residues: Glutaminase 1 (327 aa).

7 residues coordinate substrate: Ser-74, Asn-126, Glu-170, Asn-177, Tyr-201, Tyr-253, and Val-271.

Belongs to the glutaminase family. Homotetramer.

The enzyme catalyses L-glutamine + H2O = L-glutamate + NH4(+). The polypeptide is Glutaminase 1 (glsA1) (Bacillus subtilis (strain 168)).